The following is a 328-amino-acid chain: UPF0194 membrane protein YE2891 (328 aa).

The N-terminal stretch at 1–22 (MNRKKIIVAVVIVALLAAIGYG) is a signal peptide. Coiled-coil stretches lie at residues 80 to 109 (YVNALKQAQANVQSAQAQLALLKAGYREEE) and 139 to 208 (ANKA…TTLL).

It belongs to the UPF0194 family.

The protein resides in the periplasm. The polypeptide is UPF0194 membrane protein YE2891 (Yersinia enterocolitica serotype O:8 / biotype 1B (strain NCTC 13174 / 8081)).